The following is a 471-amino-acid chain: 6-phosphofructo-2-kinase/fructose-2,6-bisphosphatase 1 (471 aa).

Ser-2 is modified (N-acetylserine). The tract at residues 2–250 (SPEMGELTQT…VYYLMNIHVT (249 aa)) is 6-phosphofructo-2-kinase. Residue Ser-33 is modified to Phosphoserine; by PKA. 49–57 (GLPARGKTY) contacts ATP. The beta-D-fructose 6-phosphate site is built by Arg-82 and Arg-105. Asp-131 is a catalytic residue. Positions 133 and 139 each coordinate beta-D-fructose 6-phosphate. Ser-141 is modified (phosphoserine). Cys-161 is an active-site residue. 170 to 175 (NIRQVK) serves as a coordination point for ATP. Beta-D-fructose 6-phosphate is bound by residues Lys-175, Arg-196, and Tyr-200. Positions 251 to 471 (PRSIYLCRHG…EALDTVPAHY (221 aa)) are fructose-2,6-bisphosphatase. Arg-258 provides a ligand contact to beta-D-fructose 2,6-bisphosphate. His-259 serves as the catalytic Tele-phosphohistidine intermediate. Beta-D-fructose 2,6-bisphosphate-binding residues include Asn-265, Gly-271, and Arg-308. Glu-328 (proton donor/acceptor) is an active-site residue. 6 residues coordinate beta-D-fructose 2,6-bisphosphate: Tyr-339, Arg-353, Lys-357, Tyr-368, Gln-394, and Arg-398. Residue 350-353 (FALR) coordinates ATP. Residues 394–398 (QAVMR) and Tyr-430 contribute to the ATP site.

This sequence in the C-terminal section; belongs to the phosphoglycerate mutase family. Homodimer. In terms of tissue distribution, liver.

The enzyme catalyses beta-D-fructose 2,6-bisphosphate + H2O = beta-D-fructose 6-phosphate + phosphate. It carries out the reaction beta-D-fructose 6-phosphate + ATP = beta-D-fructose 2,6-bisphosphate + ADP + H(+). Its activity is regulated as follows. Phosphorylation at Ser-33 inhibits the kinase and activates the bisphosphatase. Functionally, synthesis and degradation of fructose 2,6-bisphosphate. The chain is 6-phosphofructo-2-kinase/fructose-2,6-bisphosphatase 1 from Homo sapiens (Human).